A 470-amino-acid polypeptide reads, in one-letter code: Ubiquitin carboxyl-terminal hydrolase calypso (470 aa).

The UCH catalytic domain maps to 43–274; sequence GWLELESDPG…IRFNLMAVVP (232 aa). Catalysis depends on C129, which acts as the Nucleophile. The active-site Proton donor is the H211. Positions 305 to 324 are disordered; that stretch reads DEQGEGGNGDPQRPDTPSTL. A ULD domain is found at 373 to 401; sequence NYDKFICTFLSMLAHQGVLGELVSQHLLP. The segment at 403 to 470 is positively charged C-terminal tail required for binding nucleosomes; it reads KKISGQSAAN…KGRNKCKKRK (68 aa). Low complexity predominate over residues 422–451; it reads ANAGATAAGAAGAAPKSQQQQAAAAKNGKS. Residues 422–470 are disordered; sequence ANAGATAAGAAGAAPKSQQQQAAAAKNGKSPSKTPGRRRKGRNKCKKRK. Over residues 456–470 the composition is skewed to basic residues; it reads PGRRRKGRNKCKKRK.

Belongs to the peptidase C12 family. BAP1 subfamily. Catalytic component of the polycomb repressive deubiquitinase (PR-DUB) complex, at least composed of caly/calypso, Asx and sba (MBD5/6 homolog). The PR-DUB complex associates with nucleosomes to mediate deubiquitination of histone H2AK118ub1 substrates; the association requires the positively charged C-terminal tail of caly, probably due to direct binding of DNA. Interacts (via ULD domain) with Asx (via DEUBAD domain); the interaction produces a stable heterodimer with a composite binding site for ubiquitin. Homodimerizes (via coiled-coil hinge-region between the UCH and ULD domains) to mediate assembly of 2 copies of the caly-Asx heterodimer into a bisymmetric tetramer; dimerization enhances PR-DUB association with nucleosomes.

The protein localises to the nucleus. The catalysed reaction is Thiol-dependent hydrolysis of ester, thioester, amide, peptide and isopeptide bonds formed by the C-terminal Gly of ubiquitin (a 76-residue protein attached to proteins as an intracellular targeting signal).. Its function is as follows. Catalytic component of the polycomb repressive deubiquitinase (PR-DUB) complex, a complex that specifically mediates deubiquitination of histone H2A monoubiquitinated at 'Lys-119' (H2AK118ub1). Mediates bisymmetric organization of the PR-DUB complex and is involved in association with nucleosomes to mediate deubiquitination. Does not deubiquitinate monoubiquitinated histone H2B. Required to maintain the transcriptionally repressive state of homeotic genes throughout development. The PR-DUB complex has weak or no activity toward 'Lys-48'- and 'Lys-63'-linked polyubiquitin chains. Polycomb group (PcG) protein. The polypeptide is Ubiquitin carboxyl-terminal hydrolase calypso (Drosophila ananassae (Fruit fly)).